Consider the following 503-residue polypeptide: Maturase K (503 aa).

This sequence belongs to the intron maturase 2 family. MatK subfamily.

The protein localises to the plastid. The protein resides in the chloroplast. Its function is as follows. Usually encoded in the trnK tRNA gene intron. Probably assists in splicing its own and other chloroplast group II introns. This chain is Maturase K, found in Cercocarpus betuloides (Mountain mahogany).